The chain runs to 364 residues: UDP-N-acetylglucosamine--N-acetylmuramyl-(pentapeptide) pyrophosphoryl-undecaprenol N-acetylglucosamine transferase (364 aa).

Residues Thr-10–Gly-12, Asn-128, Arg-170, Ser-199, Ile-250, and Gln-295 each bind UDP-N-acetyl-alpha-D-glucosamine.

The protein belongs to the glycosyltransferase 28 family. MurG subfamily.

It is found in the cell inner membrane. It catalyses the reaction di-trans,octa-cis-undecaprenyl diphospho-N-acetyl-alpha-D-muramoyl-L-alanyl-D-glutamyl-meso-2,6-diaminopimeloyl-D-alanyl-D-alanine + UDP-N-acetyl-alpha-D-glucosamine = di-trans,octa-cis-undecaprenyl diphospho-[N-acetyl-alpha-D-glucosaminyl-(1-&gt;4)]-N-acetyl-alpha-D-muramoyl-L-alanyl-D-glutamyl-meso-2,6-diaminopimeloyl-D-alanyl-D-alanine + UDP + H(+). The protein operates within cell wall biogenesis; peptidoglycan biosynthesis. Its function is as follows. Cell wall formation. Catalyzes the transfer of a GlcNAc subunit on undecaprenyl-pyrophosphoryl-MurNAc-pentapeptide (lipid intermediate I) to form undecaprenyl-pyrophosphoryl-MurNAc-(pentapeptide)GlcNAc (lipid intermediate II). The polypeptide is UDP-N-acetylglucosamine--N-acetylmuramyl-(pentapeptide) pyrophosphoryl-undecaprenol N-acetylglucosamine transferase (Chlorobium limicola (strain DSM 245 / NBRC 103803 / 6330)).